The chain runs to 447 residues: Ribosomal protein uS12 methylthiotransferase RimO (447 aa).

One can recognise an MTTase N-terminal domain in the interval 4–114; it reads PKVGFVSLGC…VMEAVHEYVP (111 aa). Residues Cys-13, Cys-49, Cys-78, Cys-147, Cys-151, and Cys-154 each contribute to the [4Fe-4S] cluster site. The Radical SAM core domain occupies 133–370; the sequence is LTPKHYAYLK…MQVQQQISAA (238 aa). The region spanning 373–443 is the TRAM domain; sequence QKRIGQTMTV…EYDLFAKLIK (71 aa).

The protein belongs to the methylthiotransferase family. RimO subfamily. [4Fe-4S] cluster is required as a cofactor.

Its subcellular location is the cytoplasm. The enzyme catalyses L-aspartate(89)-[ribosomal protein uS12]-hydrogen + (sulfur carrier)-SH + AH2 + 2 S-adenosyl-L-methionine = 3-methylsulfanyl-L-aspartate(89)-[ribosomal protein uS12]-hydrogen + (sulfur carrier)-H + 5'-deoxyadenosine + L-methionine + A + S-adenosyl-L-homocysteine + 2 H(+). In terms of biological role, catalyzes the methylthiolation of an aspartic acid residue of ribosomal protein uS12. This Acinetobacter baumannii (strain SDF) protein is Ribosomal protein uS12 methylthiotransferase RimO.